We begin with the raw amino-acid sequence, 100 residues long: Cobalt transport protein CbiN (100 aa).

2 consecutive transmembrane segments (helical) span residues 8–28 (LSNWLLIGGVIALAVLPLIFV) and 69–89 (LLFSSQAALGAGIIGYAVGLY).

It belongs to the CbiN family. Forms an energy-coupling factor (ECF) transporter complex composed of an ATP-binding protein (A component, CbiO), a transmembrane protein (T component, CbiQ) and 2 possible substrate-capture proteins (S components, CbiM and CbiN) of unknown stoichimetry.

The protein localises to the cell inner membrane. It participates in cofactor biosynthesis; adenosylcobalamin biosynthesis. Functionally, part of the energy-coupling factor (ECF) transporter complex CbiMNOQ involved in cobalt import. In Nostoc sp. (strain PCC 7120 / SAG 25.82 / UTEX 2576), this protein is Cobalt transport protein CbiN.